A 438-amino-acid chain; its full sequence is Nudix hydrolase 19, chloroplastic (438 aa).

The N-terminal 36 residues, 1 to 36 (MLALFLSSSSYPTLSFLSRSVTLNLARTTTLSALTM), are a transit peptide targeting the chloroplast. Zn(2+) contacts are provided by Cys-212, Cys-215, Cys-230, and Cys-235. Residues Tyr-240, 276 to 278 (AGF), Glu-292, Glu-296, and Glu-342 each bind substrate. The Nudix hydrolase domain maps to 241-371 (PRVDPVVIML…EYRKAQRTAA (131 aa)). Residues Ala-276, Glu-292, Glu-296, and Glu-342 each contribute to the Mg(2+) site. Residues 277-298 (GFIEPGESLEEAVRRETWEETG) carry the Nudix box motif. The Microbody targeting signal motif lies at 422–424 (PDD).

Belongs to the Nudix hydrolase family. NudC subfamily. The cofactor is Mg(2+). It depends on Zn(2+) as a cofactor. As to expression, expressed in roots, leaves, stems and inflorescences.

The protein localises to the plastid. It localises to the chloroplast. The catalysed reaction is a 5'-end NAD(+)-phospho-ribonucleoside in mRNA + H2O = a 5'-end phospho-adenosine-phospho-ribonucleoside in mRNA + beta-nicotinamide D-ribonucleotide + 2 H(+). The enzyme catalyses NAD(+) + H2O = beta-nicotinamide D-ribonucleotide + AMP + 2 H(+). It carries out the reaction NADH + H2O = reduced beta-nicotinamide D-ribonucleotide + AMP + 2 H(+). In terms of biological role, mRNA decapping enzyme that specifically removes the nicotinamide adenine dinucleotide (NAD) cap from a subset of mRNAs by hydrolyzing the diphosphate linkage to produce nicotinamide mononucleotide (NMN) and 5' monophosphate mRNA. The NAD-cap is present at the 5'-end of some RNAs; in contrast to the canonical N7 methylguanosine (m7G) cap, the NAD cap promotes mRNA decay. Mediates the hydrolysis of some nucleoside diphosphate derivatives. Has a high affinity for NADPH compared with that for NADH. The polypeptide is Nudix hydrolase 19, chloroplastic (NUDT19) (Arabidopsis thaliana (Mouse-ear cress)).